The sequence spans 331 residues: Probable allantoicase (331 aa).

It belongs to the allantoicase family.

The catalysed reaction is allantoate + H2O = (S)-ureidoglycolate + urea. It participates in nitrogen metabolism; (S)-allantoin degradation; (S)-ureidoglycolate from allantoate (aminidohydrolase route): step 1/1. The chain is Probable allantoicase from Pseudomonas fluorescens (strain SBW25).